The chain runs to 332 residues: DNA-directed RNA polymerase subunit alpha (332 aa).

The tract at residues 1-232 is alpha N-terminal domain (alpha-NTD); that stretch reads MQVSNFLKPR…DQLTAFVELE (232 aa). An alpha C-terminal domain (alpha-CTD) region spans residues 246-332; that stretch reads IDPVLLQPID…LREEETKVTA (87 aa).

This sequence belongs to the RNA polymerase alpha chain family. In terms of assembly, homodimer. The RNAP catalytic core consists of 2 alpha, 1 beta, 1 beta' and 1 omega subunit. When a sigma factor is associated with the core the holoenzyme is formed, which can initiate transcription.

The enzyme catalyses RNA(n) + a ribonucleoside 5'-triphosphate = RNA(n+1) + diphosphate. Its function is as follows. DNA-dependent RNA polymerase catalyzes the transcription of DNA into RNA using the four ribonucleoside triphosphates as substrates. In Nitrosococcus oceani (strain ATCC 19707 / BCRC 17464 / JCM 30415 / NCIMB 11848 / C-107), this protein is DNA-directed RNA polymerase subunit alpha.